We begin with the raw amino-acid sequence, 196 residues long: Pyridoxal 5'-phosphate synthase subunit PdxT (196 aa).

Glycine 47–serine 49 contributes to the L-glutamine binding site. Cysteine 79 acts as the Nucleophile in catalysis. L-glutamine contacts are provided by residues arginine 106 and isoleucine 134 to arginine 135. Active-site charge relay system residues include histidine 170 and glutamate 172.

This sequence belongs to the glutaminase PdxT/SNO family. As to quaternary structure, in the presence of PdxS, forms a dodecamer of heterodimers. Only shows activity in the heterodimer.

The enzyme catalyses aldehydo-D-ribose 5-phosphate + D-glyceraldehyde 3-phosphate + L-glutamine = pyridoxal 5'-phosphate + L-glutamate + phosphate + 3 H2O + H(+). It catalyses the reaction L-glutamine + H2O = L-glutamate + NH4(+). Its pathway is cofactor biosynthesis; pyridoxal 5'-phosphate biosynthesis. Its function is as follows. Catalyzes the hydrolysis of glutamine to glutamate and ammonia as part of the biosynthesis of pyridoxal 5'-phosphate. The resulting ammonia molecule is channeled to the active site of PdxS. The polypeptide is Pyridoxal 5'-phosphate synthase subunit PdxT (Bacillus cereus (strain G9842)).